The chain runs to 141 residues: Ly6/PLAUR domain-containing protein 1 (141 aa).

Residues 1 to 20 (MWVLGIAATFCGLFWLPGLA) form the signal peptide. 6 disulfide bridges follow: cysteine 25/cysteine 54, cysteine 28/cysteine 37, cysteine 46/cysteine 71, cysteine 77/cysteine 100, cysteine 88/cysteine 97, and cysteine 101/cysteine 106. Positions 25 to 107 (CYQCEEFQLN…ISCCNTPLCN (83 aa)) constitute a UPAR/Ly6 domain. Asparagine 45 is a glycosylation site (N-linked (GlcNAc...) asparagine). Glycine 115 is lipidated: GPI-anchor amidated glycine. Residues 116–141 (SSASAIRPGLLTTLLFFHLALCLAHC) constitute a propeptide, removed in mature form.

As to quaternary structure, interacts with CHRNA4 and nAChRs containing alpha-4:beta-2 (CHRNA4:CHRNB2) and alpha-7 (CHRNA7) subunits. As to expression, preferentially expressed in the nervous system. Expressed in embryonic and postnatal postmitotic central and peripheral neurons including subpopulations of motor neurons, sensory neurons, interneurons and neurons of the autonomous nervous system. Expressed around the growing nerves in the limb bud. Expressed at high levels in specific brain regions such as the prefrontal cortex, amygdala, hippocampus, mediodorsal thalamus, dentate gyrus and specific brainstem nuclei (at protein level).

Its subcellular location is the cell membrane. Functionally, believed to act as a modulator of nicotinic acetylcholine receptors (nAChRs) activity. In vitro increases receptor desensitization and decreases affinity for ACh of alpha-4:beta-2-containing nAChRs. May play a role in the intracellular trafficking of alpha-4:beta-2 and alpha-7-containing nAChRs and may inhibit their expression at the cell surface. May be involved in the control of anxiety. This Mus musculus (Mouse) protein is Ly6/PLAUR domain-containing protein 1 (Lypd1).